The following is a 250-amino-acid chain: Phosphonates import ATP-binding protein PhnC (250 aa).

The region spanning 2–247 (IVFNNVNKVW…KLDAQAMKKI (246 aa)) is the ABC transporter domain. 35 to 42 (GLSGAGKT) lines the ATP pocket.

Belongs to the ABC transporter superfamily. Phosphonates importer (TC 3.A.1.9.1) family. The complex is composed of two ATP-binding proteins (PhnC), two transmembrane proteins (PhnE) and a solute-binding protein (PhnD).

The protein resides in the cell membrane. The catalysed reaction is phosphonate(out) + ATP + H2O = phosphonate(in) + ADP + phosphate + H(+). Functionally, part of the ABC transporter complex PhnCDE involved in phosphonates import. Responsible for energy coupling to the transport system. This Mycoplasma mycoides subsp. mycoides SC (strain CCUG 32753 / NCTC 10114 / PG1) protein is Phosphonates import ATP-binding protein PhnC.